The sequence spans 196 residues: ATP synthase subunit b 2 (196 aa).

Positions 1-18 (MVVAQAGAPAHPPAAHGA) are enriched in low complexity. Positions 1-33 (MVVAQAGAPAHPPAAHGAEAGHGEAAGGEHGGF) are disordered. Residues 41–60 (FASQLIWLIVSFGALYFLMS) form a helical membrane-spanning segment.

It belongs to the ATPase B chain family. F-type ATPases have 2 components, F(1) - the catalytic core - and F(0) - the membrane proton channel. F(1) has five subunits: alpha(3), beta(3), gamma(1), delta(1), epsilon(1). F(0) has three main subunits: a(1), b(2) and c(10-14). The alpha and beta chains form an alternating ring which encloses part of the gamma chain. F(1) is attached to F(0) by a central stalk formed by the gamma and epsilon chains, while a peripheral stalk is formed by the delta and b chains.

It localises to the cell inner membrane. In terms of biological role, f(1)F(0) ATP synthase produces ATP from ADP in the presence of a proton or sodium gradient. F-type ATPases consist of two structural domains, F(1) containing the extramembraneous catalytic core and F(0) containing the membrane proton channel, linked together by a central stalk and a peripheral stalk. During catalysis, ATP synthesis in the catalytic domain of F(1) is coupled via a rotary mechanism of the central stalk subunits to proton translocation. Component of the F(0) channel, it forms part of the peripheral stalk, linking F(1) to F(0). The b'-subunit is a diverged and duplicated form of b found in plants and photosynthetic bacteria. This is ATP synthase subunit b 2 (atpF2) from Azorhizobium caulinodans (strain ATCC 43989 / DSM 5975 / JCM 20966 / LMG 6465 / NBRC 14845 / NCIMB 13405 / ORS 571).